A 443-amino-acid chain; its full sequence is Signal recognition particle 54 kDa protein (443 aa).

Residues G104–T111, D184–R188, and T242–D245 contribute to the GTP site.

The protein belongs to the GTP-binding SRP family. SRP54 subfamily. In terms of assembly, part of the signal recognition particle protein translocation system, which is composed of SRP and FtsY. Archaeal SRP consists of a 7S RNA molecule of 300 nucleotides and two protein subunits: SRP54 and SRP19.

The protein resides in the cytoplasm. The catalysed reaction is GTP + H2O = GDP + phosphate + H(+). Functionally, involved in targeting and insertion of nascent membrane proteins into the cytoplasmic membrane. Binds to the hydrophobic signal sequence of the ribosome-nascent chain (RNC) as it emerges from the ribosomes. The SRP-RNC complex is then targeted to the cytoplasmic membrane where it interacts with the SRP receptor FtsY. The polypeptide is Signal recognition particle 54 kDa protein (Methanosarcina barkeri (strain Fusaro / DSM 804)).